We begin with the raw amino-acid sequence, 852 residues long: Taste receptor type 1 member 3 (852 aa).

The first 20 residues, 1–20, serve as a signal peptide directing secretion; that stretch reads MLGPAVLGLSLWALLHPGTG. Residues 21-570 are Extracellular-facing; the sequence is APLCLSQQLR…FLAWGEPAVL (550 aa). Residues N85, N130, N264, N285, N380, N411, N432, and N475 are each glycosylated (N-linked (GlcNAc...) asparagine). The segment at 536-545 is required for brazzein responsiveness; it reads IACTFCGQDE. The chain crosses the membrane as a helical span at residues 571–591; the sequence is LLLLLLSLALGLVLAALGLFV. Over 592–603 the chain is Cytoplasmic; the sequence is HHRDSPLVQASG. Residues 604 to 624 form a helical membrane-spanning segment; it reads GPLACFGLVCLGLVCLSVLLF. Over 625–639 the chain is Extracellular; that stretch reads PGQPSPARCLAQQPL. The helical transmembrane segment at 640 to 660 threads the bilayer; the sequence is SHLPLTGCLSTLFLQAAEIFV. At 661 to 682 the chain is on the cytoplasmic side; it reads ESELPLSWADRLSGCLRGPWAW. Residues 683–703 traverse the membrane as a helical segment; it reads LVVLLAMLVEVALCTWYLVAF. Topologically, residues 704–729 are extracellular; sequence PPEVVTDWHMLPTEALVHCRTRSWVS. Residues 730–750 form a helical membrane-spanning segment; sequence FGLAHATNATLAFLCFLGTFL. At 751–762 the chain is on the cytoplasmic side; it reads VRSQPGCYNRAR. Residues 763-783 traverse the membrane as a helical segment; that stretch reads GLTFAMLAYFITWVSFVPLLA. At 784–789 the chain is on the extracellular side; it reads NVQVVL. Residues 790-810 traverse the membrane as a helical segment; sequence RPAVQMGALLLCVLGILAAFH. Over 811 to 852 the chain is Cytoplasmic; it reads LPRCYLLMRQPGLNTPEFFLGGGPGDAQGQNDGNTGNQGKHE.

This sequence belongs to the G-protein coupled receptor 3 family. TAS1R subfamily. As to quaternary structure, forms homodimers or heterodimers with TAS1R1 and TAS1R2.

The protein localises to the cell membrane. In terms of biological role, putative taste receptor. TAS1R1/TAS1R3 responds to the umami taste stimulus (the taste of monosodium glutamate). TAS1R2/TAS1R3 recognizes diverse natural and synthetic sweeteners. TAS1R3 is essential for the recognition and response to the disaccharide trehalose. Sequence differences within and between species can significantly influence the selectivity and specificity of taste responses. The protein is Taste receptor type 1 member 3 (TAS1R3) of Homo sapiens (Human).